The primary structure comprises 945 residues: MEVLSTSSPLTLHSHRLLSASSSSSHVTSIAASSLSSFASSYLGISLSNRTIHRFSTTPTNLRRFPQRKRKKFTPISAVFERFTERAIRAIIFSQKEAKSLGKDMVYTQHLLLGLIAEDRDPQGFLGSGITIDKAREAVWSIWDEANSDSKQEEASSTSYSKSTDMPFSISTKRVFEAAVEYSRTMDCQYIAPEHIAVGLFTVDDGSAGRVLKRLGANMNLLTAAALTRLKGEIAKDGREPSSSSKGSFESPPSGRIAGSGPGGKKAKNVLEQFCVDLTARASEGLIDPVIGREKEVQRVIQILCRRTKNNPILLGEAGVGKTAIAEGLAISIAEASAPGFLLTKRIMSLDIGLLMAGAKERGELEARVTALISEVKKSGKVILFIDEVHTLIGSGTVGRGNKGSGLDIANLLKPSLGRGELQCIASTTLDEFRSQFEKDKALARRFQPVLINEPSEEDAVKILLGLREKYEAHHNCKYTMEAIDAAVYLSSRYIADRFLPDKAIDLIDEAGSRARIEAFRKKKEDAICILSKPPNDYWQEIKTVQAMHEVVLSSRQKQDDGDAISDESGELVEESSLPPAAGDDEPILVGPDDIAAVASVWSGIPVQQITADERMLLMSLEDQLRGRVVGQDEAVAAISRAVKRSRVGLKDPDRPIAAMLFCGPTGVGKTELTKALAANYFGSEESMLRLDMSEYMERHTVSKLIGSPPGYVGFEEGGMLTEAIRRRPFTVVLFDEIEKAHPDIFNILLQLFEDGHLTDSQGRRVSFKNALIIMTSNVGSLAIAKGRHGSIGFILDDDEEAASYTGMKALVVEELKNYFRPELLNRIDEIVIFRQLEKAQMMEILNLMLQDLKSRLVALGVGLEVSEPVKELICKQGYDPAYGARPLRRTVTEIVEDPLSEAFLAGSFKPGDTAFVVLDDTGNPSVRTKPDSSTIRVTDKTSIA.

The transit peptide at 1–89 directs the protein to the chloroplast; sequence MEVLSTSSPL…FERFTERAIR (89 aa). Repeat regions lie at residues 90–146 and 168–233; these read AIIF…WDEA and FSIS…LKGE. Positions 90–233 constitute a Clp R domain; that stretch reads AIIFSQKEAK…AAALTRLKGE (144 aa). A disordered region spans residues 233-264; the sequence is EIAKDGREPSSSSKGSFESPPSGRIAGSGPGG. The span at 241 to 255 shows a compositional bias: low complexity; sequence PSSSSKGSFESPPSG. An i region spans residues 271–523; it reads LEQFCVDLTA…RARIEAFRKK (253 aa). 316–323 serves as a coordination point for ATP; sequence GEAGVGKT. The interval 555-586 is disordered; it reads SRQKQDDGDAISDESGELVEESSLPPAAGDDE. Residues 562 to 574 are compositionally biased toward acidic residues; it reads GDAISDESGELVE. Positions 590-781 are II; the sequence is VGPDDIAAVA…LIIMTSNVGS (192 aa). Position 664 to 671 (664 to 671) interacts with ATP; sequence GPTGVGKT.

It belongs to the ClpA/ClpB family. ClpD subfamily. As to quaternary structure, homodimer and homohexamer. Hexamerization upon addition of ATP. Interacts with CLPT1. Stably associated with the import machinery. It depends on Mg(2+) as a cofactor. In terms of tissue distribution, expressed in stems and leaves.

It is found in the plastid. It localises to the chloroplast stroma. The enzyme catalyses ATP + H2O = ADP + phosphate + H(+). Its function is as follows. Molecular chaperone that interact with a ClpP-like protease involved in degradation of denatured proteins in the chloroplast. The ATPase activity of CLPD is stimulated by CLPT1. Has no ADPase activity. Interacts with transit peptides with a positional preference. Localization of the signal sequence at the N-terminal end of a protein seems mandatory for interaction to take place. The polypeptide is Chaperone protein ClpD, chloroplastic (Arabidopsis thaliana (Mouse-ear cress)).